Here is a 99-residue protein sequence, read N- to C-terminus: Large ribosomal subunit protein bL21 (99 aa).

It belongs to the bacterial ribosomal protein bL21 family. In terms of assembly, part of the 50S ribosomal subunit. Contacts protein L20.

This protein binds to 23S rRNA in the presence of protein L20. In Anaplasma phagocytophilum (strain HZ), this protein is Large ribosomal subunit protein bL21.